The following is a 729-amino-acid chain: Cytoplasmic polyadenylation element-binding protein 4 (729 aa).

Disordered regions lie at residues 20–50 (FPVR…NNTA) and 78–133 (EKAK…KEKL). Residues 24-35 (FHPHLQPPHHHQ) show a composition bias toward basic residues. Residues 83 to 96 (QQQEQQDPLEKQQL) show a composition bias toward low complexity. Phosphoserine occurs at positions 97, 99, and 137. Residues 218–324 (FGGSFSPQIG…RDHRRGLNGG (107 aa)) are disordered. Positions 232 to 249 (HHPHHPHFQHHHSQHQQQ) are enriched in basic residues. Residues serine 252 and serine 255 each carry the phosphoserine modification. Residues 285-300 (WSSYQSPSPTPSSSWS) show a composition bias toward low complexity. The span at 301-311 (PGGGGYGGWGA) shows a compositional bias: gly residues. The residue at position 326 (threonine 326) is a Phosphothreonine. Phosphoserine is present on residues serine 330 and serine 332. 2 RRM domains span residues 472-563 (RKVF…PWNL) and 580-662 (KTIF…PYVL). The tract at residues 541–543 (KLY) is RNA-binding. Cysteine 667, cysteine 675, cysteine 684, cysteine 689, cysteine 694, cysteine 697, histidine 702, and histidine 710 together coordinate Zn(2+).

This sequence belongs to the RRM CPEB family. Interacts with TOB1. As to expression, highly expressed in brain, including hippocampus, amygdala, granule and Purkinje cells of the cerebellum (at protein level). Expressed in spinal cord (at protein level). Expressed in kidney, lung and heart (at protein level). Expressed in liver (at protein level). Expressed in spleen and testis (at protein level). Weakly expressed in ovary and in granular cells of dentate gyrus and the pyramidal cells of CA3 and CA1 of the hippocampus.

The protein resides in the cytoplasm. The protein localises to the cell projection. Its subcellular location is the dendrite. It is found in the dendritic spine. It localises to the postsynaptic density. The protein resides in the axon. The protein localises to the growth cone. Its subcellular location is the endoplasmic reticulum. It is found in the perinuclear region. Functionally, sequence-specific RNA-binding protein that binds to the cytoplasmic polyadenylation element (CPE), an uridine-rich sequence element (consensus sequence 5'-UUUUUAU-3') within the mRNA 3'-UTR. RNA binding results in a clear conformational change analogous to the Venus fly trap mechanism. Regulates activation of unfolded protein response (UPR) in the process of adaptation to ER stress in liver, by maintaining translation of CPE-regulated mRNAs in conditions in which global protein synthesis is inhibited. Required for cell cycle progression, specifically for cytokinesis and chromosomal segregation. Plays a role as an oncogene promoting tumor growth and progression by positively regulating translation of t-plasminogen activator/PLAT. Stimulates proliferation of melanocytes. In contrast to CPEB1 and CPEB3, does not play role in synaptic plasticity, learning and memory. The chain is Cytoplasmic polyadenylation element-binding protein 4 (Cpeb4) from Mus musculus (Mouse).